The sequence spans 1521 residues: uncharacterized protein (1521 aa).

Disordered stretches follow at residues 1 to 20, 85 to 124, 218 to 254, 431 to 482, and 735 to 797; these read MENN…NSNN, TFQS…NNNN, ASSP…SSSS, VLNS…TGIT, and NNNN…HQQQ. 3 stretches are compositionally biased toward low complexity: residues 94–108, 219–254, and 431–454; these read NTSS…QNNP, SSPS…SSSS, and VLNS…NNTS. Polar residues predominate over residues 455-464; sequence PAIVTSASIH. Low complexity-rich tracts occupy residues 465–482 and 735–762; these read NSNG…TGIT and NNNN…NNIL. A compositionally biased stretch (polar residues) spans 763-774; that stretch reads SNTLTSSLINEP. Residues 775–788 show a composition bias toward low complexity; sequence NQQHQHQQHQQQNQ. The stretch at 853-903 forms a coiled coil; it reads IVNSQQQQQQQQQQQQQQQQQQQQQQQQQQQQQQQQQQQQQQHNNTQNINN. Over residues 1398–1453 the composition is skewed to low complexity; it reads QQPLPTSKTSSSSSSTSSEATPYLSSSVPPSIVTSTPSTTPMISSSNPNTSSLPTS. The interval 1398–1455 is disordered; the sequence is QQPLPTSKTSSSSSSTSSEATPYLSSSVPPSIVTSTPSTTPMISSSNPNTSSLPTSER.

This is an uncharacterized protein from Dictyostelium discoideum (Social amoeba).